Consider the following 314-residue polypeptide: Ribosomal protein L11 methyltransferase (314 aa).

The S-adenosyl-L-methionine site is built by Thr-163, Gly-184, Asp-206, and Asn-248.

Belongs to the methyltransferase superfamily. PrmA family.

It localises to the cytoplasm. It catalyses the reaction L-lysyl-[protein] + 3 S-adenosyl-L-methionine = N(6),N(6),N(6)-trimethyl-L-lysyl-[protein] + 3 S-adenosyl-L-homocysteine + 3 H(+). In terms of biological role, methylates ribosomal protein L11. The protein is Ribosomal protein L11 methyltransferase of Lactobacillus delbrueckii subsp. bulgaricus (strain ATCC 11842 / DSM 20081 / BCRC 10696 / JCM 1002 / NBRC 13953 / NCIMB 11778 / NCTC 12712 / WDCM 00102 / Lb 14).